Consider the following 380-residue polypeptide: Crotonobetainyl-CoA reductase (380 aa).

This sequence belongs to the acyl-CoA dehydrogenase family. As to quaternary structure, homotetramer. It depends on FAD as a cofactor.

The protein resides in the cytoplasm. The catalysed reaction is 4-(trimethylamino)butanoyl-CoA + oxidized [electron-transfer flavoprotein] + H(+) = crotonobetainyl-CoA + reduced [electron-transfer flavoprotein]. Its pathway is amine and polyamine metabolism; carnitine metabolism. In terms of biological role, catalyzes the reduction of crotonobetainyl-CoA to gamma-butyrobetainyl-CoA. The protein is Crotonobetainyl-CoA reductase of Proteus sp. (strain LE138).